The following is an 861-amino-acid chain: Leucine--tRNA ligase (861 aa).

A 'HIGH' region motif is present at residues 42 to 52 (PYPSGRIHMGH). Positions 623–627 (KMSKS) match the 'KMSKS' region motif. Lys-626 provides a ligand contact to ATP.

It belongs to the class-I aminoacyl-tRNA synthetase family.

The protein resides in the cytoplasm. The enzyme catalyses tRNA(Leu) + L-leucine + ATP = L-leucyl-tRNA(Leu) + AMP + diphosphate. This is Leucine--tRNA ligase from Caulobacter vibrioides (strain ATCC 19089 / CIP 103742 / CB 15) (Caulobacter crescentus).